A 217-amino-acid chain; its full sequence is Peptide methionine sulfoxide reductase MsrA (217 aa).

Positions 16–39 are disordered; sequence EALKGGRHPVLESPQPHTVLGTPI. Cysteine 56 is an active-site residue.

Belongs to the MsrA Met sulfoxide reductase family.

The enzyme catalyses L-methionyl-[protein] + [thioredoxin]-disulfide + H2O = L-methionyl-(S)-S-oxide-[protein] + [thioredoxin]-dithiol. It carries out the reaction [thioredoxin]-disulfide + L-methionine + H2O = L-methionine (S)-S-oxide + [thioredoxin]-dithiol. Functionally, has an important function as a repair enzyme for proteins that have been inactivated by oxidation. Catalyzes the reversible oxidation-reduction of methionine sulfoxide in proteins to methionine. In Corynebacterium efficiens (strain DSM 44549 / YS-314 / AJ 12310 / JCM 11189 / NBRC 100395), this protein is Peptide methionine sulfoxide reductase MsrA.